Here is a 565-residue protein sequence, read N- to C-terminus: Pentatricopeptide repeat-containing protein At3g20730 (565 aa).

PPR repeat units lie at residues 12-46 (SPSLYLKALKLCSYQNVKKQLLLIHGNSITNGFCS), 47-77 (NLQLKDMLIDLYLKQGDVKHARKLFDRISKR), 78-112 (DVVSWTAMISRFSRCGYHPDALLLFKEMHREDVKA), 113-147 (NQFTYGSVLKSCKDLGCLKEGMQIHGSVEKGNCAG), 148-178 (NLIVRSALLSLYARCGKMEEARLQFDSMKER), 179-213 (DLVSWNAMIDGYTANACADTSFSLFQLMLTEGKKP), 214-248 (DCFTFGSLLRASIVVKCLEIVSELHGLAIKLGFGR), 249-279 (SSALIRSLVNAYVKCGSLANAWKLHEGTKKR), 280-315 (DLLSCTALITGFSQQNNCTSDAFDIFKDMIRMKTKM), 316-351 (DEVVVSSMLKICTTIASVTIGRQIHGFALKSSQIRF), 352-382 (DVALGNSLIDMYAKSGEIEDAVLAFEEMKEK), 383-417 (DVRSWTSLIAGYGRHGNFEKAIDLYNRMEHERIKP), 418-448 (NDVTFLSLLSACSHTGQTELGWKIYDTMINK), and 454-484 (REEHLSCIIDMLARSGYLEEAYALIRSKEGI). Residues 491-565 (TWGAFLDACR…NKAPGYSLVY (75 aa)) form a type E motif; degenerate region.

The protein belongs to the PPR family. PCMP-E subfamily.

The sequence is that of Pentatricopeptide repeat-containing protein At3g20730 (PCMP-E94) from Arabidopsis thaliana (Mouse-ear cress).